The following is a 1030-amino-acid chain: FACT complex subunit spt-16 (1030 aa).

The stretch at 424 to 445 forms a coiled coil; sequence RLKSNVIKFKEEQENREAEKDN. Composition is skewed to basic and acidic residues over residues 435 to 449 and 464 to 477; these read EQEN…DQKK and TRNK…RKER. 2 disordered regions span residues 435-477 and 491-514; these read EQEN…RKER and ARLS…SYKT. A coiled-coil region spans residues 623–645; that stretch reads RLIKEMQKRFKTEEAEEREKEGA. Residues 927-1030 are disordered; the sequence is VESDNEEAMD…KSGPSHKRRK (104 aa). Composition is skewed to acidic residues over residues 929 to 951 and 958 to 983; these read SDNE…EEDA and ESDE…DSDE. A coiled-coil region spans residues 987–1007; the sequence is KDWSDLEEEAANADKRREVEE. Residues 998-1014 are compositionally biased toward basic and acidic residues; the sequence is NADKRREVEEPSRDRDR. The span at 1015 to 1030 shows a compositional bias: basic residues; sequence KRPHSSKSGPSHKRRK.

This sequence belongs to the peptidase M24 family. SPT16 subfamily. As to quaternary structure, component of the FACT complex, a stable heterodimer of spt-16 and hmg-3 or hmg-4. As to expression, expressed in the germline and somatic cells.

It is found in the nucleus. The protein localises to the chromosome. Component of the FACT complex, a general chromatin factor that acts to reorganize nucleosomes. The FACT complex is involved in multiple processes that require DNA as a template such as mRNA elongation, DNA replication and DNA repair. During transcription elongation the FACT complex acts as a histone chaperone that both destabilizes and restores nucleosomal structure. It facilitates the passage of RNA polymerase II and transcription by promoting the dissociation of one histone H2A-H2B dimer from the nucleosome, then subsequently promotes the reestablishment of the nucleosome following the passage of RNA polymerase II. In embryos, promotes cell cycle progression and chromosomal segregation. Plays a role in the development of the anterior pharynx during embryonic development. The polypeptide is FACT complex subunit spt-16 (Caenorhabditis elegans).